The primary structure comprises 137 residues: Allergen Ulo b 1 (137 aa).

An N-terminal signal peptide occupies residues 1–11 (SLFAAAGLAAA). One can recognise an AA1-like domain in the interval 28–137 (QGDYVWKISE…PKDFVCQGVS (110 aa)). 2 disulfides stabilise this stretch: cysteine 67–cysteine 82 and cysteine 121–cysteine 133.

Belongs to the ALTA1 family. In terms of assembly, homodimer; disulfide-linked.

It localises to the secreted. This Alternaria botrytis (Ulocladium botrytis) protein is Allergen Ulo b 1.